Consider the following 323-residue polypeptide: Tetraacyldisaccharide 4'-kinase (323 aa).

56 to 63 (TVGGVGKT) is an ATP binding site.

It belongs to the LpxK family.

It carries out the reaction a lipid A disaccharide + ATP = a lipid IVA + ADP + H(+). It functions in the pathway glycolipid biosynthesis; lipid IV(A) biosynthesis; lipid IV(A) from (3R)-3-hydroxytetradecanoyl-[acyl-carrier-protein] and UDP-N-acetyl-alpha-D-glucosamine: step 6/6. Transfers the gamma-phosphate of ATP to the 4'-position of a tetraacyldisaccharide 1-phosphate intermediate (termed DS-1-P) to form tetraacyldisaccharide 1,4'-bis-phosphate (lipid IVA). The polypeptide is Tetraacyldisaccharide 4'-kinase (Legionella pneumophila (strain Lens)).